Consider the following 1019-residue polypeptide: DNA topoisomerase 1 (1019 aa).

Residues 1 to 160 form a disordered region; it reads MNSIQVKNEP…KTMSITGSGE (160 aa). Residues 46-56 show a composition bias toward basic and acidic residues; the sequence is KPLAKRPKVED. The span at 62 to 78 shows a compositional bias: polar residues; sequence PLTSTVSSQNGVQKRSG. Acidic residues-rich tracts occupy residues 83–93 and 107–136; these read DDNDDDSDSDS and SDDDEDDDDDDDEGDDDDEEDDDDDDDDDD. Interaction with DNA regions lie at residues 379–380, 442–447, and 556–558; these read KY, RAGNEK, and SAK. A Topo IB-type catalytic domain is found at 386–860; sequence TSNFKTNSDR…KKVKKEEEEN (475 aa). Residues 716 to 737 form a disordered region; it reads EQKGLTGDDGTPKKGKKAKNVE. The O-(3'-phospho-DNA)-tyrosine intermediate role is filled by tyrosine 822. 2 disordered regions span residues 843 to 890 and 940 to 1019; these read GQGK…TGDS and MRKL…AAVV. Over residues 854 to 863 the composition is skewed to basic and acidic residues; sequence KKEEEENDIK. Basic residues predominate over residues 864 to 879; it reads PKKKDAKGAASKKRAA. Basic and acidic residues-rich tracts occupy residues 940–950 and 980–996; these read MRKLDSAERKG and TSADRKMSKPIKAVDKT. Residues 997–1012 show a composition bias toward acidic residues; that stretch reads EESDDDLSSDSSDDED.

This sequence belongs to the type IB topoisomerase family. In terms of assembly, monomer.

The catalysed reaction is ATP-independent breakage of single-stranded DNA, followed by passage and rejoining.. Its function is as follows. Releases the supercoiling and torsional tension of DNA introduced during the DNA replication and transcription by transiently cleaving and rejoining one strand of the DNA duplex. Introduces a single-strand break via transesterification at a target site in duplex DNA. The scissile phosphodiester is attacked by the catalytic tyrosine of the enzyme, resulting in the formation of a DNA-(3'-phosphotyrosyl)-enzyme intermediate and the expulsion of a 5'-OH DNA strand. The free DNA strand then rotates around the intact phosphodiester bond on the opposing strand, thus removing DNA supercoils. Finally, in the religation step, the DNA 5'-OH attacks the covalent intermediate to expel the active-site tyrosine and restore the DNA phosphodiester backbone. The protein is DNA topoisomerase 1 (TOP1) of Mycosarcoma maydis (Corn smut fungus).